Here is a 340-residue protein sequence, read N- to C-terminus: Terpene synthase 29 (340 aa).

Residues Asp-132, Glu-197, Asn-257, Ser-261, and Glu-265 each coordinate Mg(2+). The short motif at 132 to 138 is the DDXXXXD motif element; it reads DEPDILE. The short motif at 257-265 is the NSE/DTE motif element; that stretch reads NDILSFYKE.

This sequence belongs to the trichodiene synthase family. Mg(2+) serves as cofactor.

Functionally, terpene cyclase that catalyzes the cyclization of farnesyl diphosphate (FPP) to a single major terpene scaffold whose chemical structure is still unknown. This chain is Terpene synthase 29, found in Postia placenta (strain ATCC 44394 / Madison 698-R) (Brown rot fungus).